The primary structure comprises 176 residues: Flavodoxin (176 aa).

Residues 4-165 (IGIFFGSDTG…RVEKWVKQVA (162 aa)) enclose the Flavodoxin-like domain.

It belongs to the flavodoxin family. The cofactor is FMN.

Functionally, low-potential electron donor to a number of redox enzymes. The protein is Flavodoxin (fldA) of Klebsiella pneumoniae.